A 702-amino-acid chain; its full sequence is Polyribonucleotide nucleotidyltransferase (702 aa).

The Mg(2+) site is built by Asp485 and Asp491. Residues 552–612 (PRTEIICIDP…EGVKKAISII (61 aa)) form the KH domain. An S1 motif domain is found at 622 to 690 (GEIYLGKVTK…NQGRINLSRK (69 aa)).

The protein belongs to the polyribonucleotide nucleotidyltransferase family. It depends on Mg(2+) as a cofactor.

Its subcellular location is the cytoplasm. The enzyme catalyses RNA(n+1) + phosphate = RNA(n) + a ribonucleoside 5'-diphosphate. In terms of biological role, involved in mRNA degradation. Catalyzes the phosphorolysis of single-stranded polyribonucleotides processively in the 3'- to 5'-direction. The protein is Polyribonucleotide nucleotidyltransferase of Clostridium botulinum (strain Kyoto / Type A2).